Reading from the N-terminus, the 1067-residue chain is Isoleucine--tRNA ligase (1067 aa).

Residues proline 49–threonine 59 carry the 'HIGH' region motif. The short motif at lysine 625–serine 629 is the 'KMSKS' region element. Lysine 628 is a binding site for ATP.

This sequence belongs to the class-I aminoacyl-tRNA synthetase family. IleS type 2 subfamily. As to quaternary structure, monomer. It depends on Zn(2+) as a cofactor.

The protein resides in the cytoplasm. The catalysed reaction is tRNA(Ile) + L-isoleucine + ATP = L-isoleucyl-tRNA(Ile) + AMP + diphosphate. Its function is as follows. Catalyzes the attachment of isoleucine to tRNA(Ile). As IleRS can inadvertently accommodate and process structurally similar amino acids such as valine, to avoid such errors it has two additional distinct tRNA(Ile)-dependent editing activities. One activity is designated as 'pretransfer' editing and involves the hydrolysis of activated Val-AMP. The other activity is designated 'posttransfer' editing and involves deacylation of mischarged Val-tRNA(Ile). The sequence is that of Isoleucine--tRNA ligase from Pyrococcus abyssi (strain GE5 / Orsay).